The sequence spans 493 residues: 3-octaprenyl-4-hydroxybenzoate carboxy-lyase (493 aa).

Residue Asn-172 participates in Mn(2+) binding. Residues 175 to 177 (IYR), 189 to 191 (RWL), and 194 to 195 (RG) each bind prenylated FMN. Mn(2+) is bound at residue Glu-238. Residue Asp-287 is the Proton donor of the active site.

The protein belongs to the UbiD family. As to quaternary structure, homohexamer. The cofactor is prenylated FMN. Mn(2+) is required as a cofactor.

Its subcellular location is the cell membrane. It catalyses the reaction a 4-hydroxy-3-(all-trans-polyprenyl)benzoate + H(+) = a 2-(all-trans-polyprenyl)phenol + CO2. It functions in the pathway cofactor biosynthesis; ubiquinone biosynthesis. In terms of biological role, catalyzes the decarboxylation of 3-octaprenyl-4-hydroxy benzoate to 2-octaprenylphenol, an intermediate step in ubiquinone biosynthesis. The polypeptide is 3-octaprenyl-4-hydroxybenzoate carboxy-lyase (Shewanella baltica (strain OS195)).